We begin with the raw amino-acid sequence, 149 residues long: Myosin light chain 1 (149 aa).

3 EF-hand domains span residues 2–37 (SATR…IGYN), 81–116 (AKTE…LGEK), and 117–149 (LTDA…VLRQ). 5 residues coordinate Ca(2+): Asp15, Asp94, Thr98, Lys100, and Asp105. Lys116 participates in a covalent cross-link: Glycyl lysine isopeptide (Lys-Gly) (interchain with G-Cter in ubiquitin). 3 residues coordinate Ca(2+): Asp123, Lys127, and Asp132.

As to quaternary structure, interacts with MYO1, MYO2 and IQG1 by binding to their IQ domains. Interacts with SEC4.

The protein localises to the bud neck. It is found in the bud tip. Its function is as follows. Essential light chain for the class II conventional myosin MYO1. Also acts as light chain for the class V unconventional myosin MYO2 and for IQG1. Involved in the assembly of the contractile actomyosin ring at the bud neck during cytokinesis by recruiting IQG1 to the bud neck. Also required for chitin and MYO2-dependent secretory vesicle deposition to the center of the bud neck for septum formation. May stabilize MYO2 by binding to its IQ domains. Its major function is probably not to regulate MYO1 activity, but rather to coordinate actin ring formation and targeted membrane deposition during cytokinesis via its interactions with MYO1, IQG1 and MYO2. In Saccharomyces cerevisiae (strain ATCC 204508 / S288c) (Baker's yeast), this protein is Myosin light chain 1 (MLC1).